A 475-amino-acid polypeptide reads, in one-letter code: Gustatory and pheromone receptor 33a (475 aa).

Topologically, residues 1–34 (MIQIMNWFSMVIGLIPLNRQQSETNFILDYAMMC) are cytoplasmic. The chain crosses the membrane as a helical span at residues 35–55 (IVPIFYVACYLLINLSHIIGL). The Extracellular segment spans residues 56–68 (CLLDSCNSVCKLS). A helical membrane pass occupies residues 69–89 (SHLFMHLGAFLYLTITLLSLY). The Cytoplasmic segment spans residues 90–128 (RRKEFFQQFDARLNDIDAVIQKCQRVAEMDKVKVTAVKH). Residues 129 to 149 (SVAYHFTWLFLFCVFTFALYY) traverse the membrane as a helical segment. The Extracellular segment spans residues 150–158 (DVRSLYLTF). A helical transmembrane segment spans residues 159–179 (GNLAFIPFMVSSFPYLAGSII). The Cytoplasmic segment spans residues 180 to 319 (QGEFIYHVSV…LALSVITNGE (140 aa)). Residues 243–281 (TGFGNENKFAGEMKRQEGQQKNDDDDLDTSNDEDEDDFD) form a disordered region. Residues 251–264 (FAGEMKRQEGQQKN) are compositionally biased toward basic and acidic residues. Over residues 265-281 (DDDDLDTSNDEDEDDFD) the composition is skewed to acidic residues. The chain crosses the membrane as a helical span at residues 320–340 (FGPQCVPYMAACFVVSIFGIF). The Extracellular segment spans residues 341–357 (LETKVNFIVGGKSRLLD). A helical transmembrane segment spans residues 358–378 (YMTYLYVIWSFTTMMVAYIVL). Over 379–441 (RLCCNANNHS…FNGVGLFALD (63 aa)) the chain is Cytoplasmic. The chain crosses the membrane as a helical span at residues 442 to 462 (YTFIFSTVSAATSYLIVLLQF). The Extracellular portion of the chain corresponds to 463–475 (DMTAILRNEGLMS).

The protein belongs to the insect chemoreceptor superfamily. Gustatory receptor (GR) family. Gr66a subfamily. As to expression, expressed widely in gustatory receptor neurons (GRNs) that respond to aversive chemicals. In larvae, is expressed in neurons of the terminal external chemosensory organ, and the dorsal, ventral and posterior external chemosensory organs.

It localises to the cell membrane. Its function is as follows. Gustatory receptor which mediates acceptance or avoidance behavior, depending on its substrates. Required for sensing all nonvolatile repulsive chemicals, including tastants, pheromones, and especially N,N-Diethyl-meta-toluamide (DEET), the most widely used insect repellent worldwide. Also functions as a pheromone receptor for a male inhibitory pheromone leading to male-male courtship suppression. The sequence is that of Gustatory and pheromone receptor 33a (Gr33a) from Drosophila melanogaster (Fruit fly).